The chain runs to 417 residues: NADH-quinone oxidoreductase subunit D (417 aa).

Belongs to the complex I 49 kDa subunit family. As to quaternary structure, NDH-1 is composed of 14 different subunits. Subunits NuoB, C, D, E, F, and G constitute the peripheral sector of the complex.

It localises to the cell inner membrane. It catalyses the reaction a quinone + NADH + 5 H(+)(in) = a quinol + NAD(+) + 4 H(+)(out). Functionally, NDH-1 shuttles electrons from NADH, via FMN and iron-sulfur (Fe-S) centers, to quinones in the respiratory chain. The immediate electron acceptor for the enzyme in this species is believed to be ubiquinone. Couples the redox reaction to proton translocation (for every two electrons transferred, four hydrogen ions are translocated across the cytoplasmic membrane), and thus conserves the redox energy in a proton gradient. The chain is NADH-quinone oxidoreductase subunit D from Aromatoleum aromaticum (strain DSM 19018 / LMG 30748 / EbN1) (Azoarcus sp. (strain EbN1)).